Consider the following 138-residue polypeptide: Large-conductance mechanosensitive channel (138 aa).

3 helical membrane-spanning segments follow: residues Val15–Val35, Ile38–Gln58, and Gly80–Val100.

Belongs to the MscL family. Homopentamer.

It localises to the cell inner membrane. In terms of biological role, channel that opens in response to stretch forces in the membrane lipid bilayer. May participate in the regulation of osmotic pressure changes within the cell. This is Large-conductance mechanosensitive channel from Brucella canis (strain ATCC 23365 / NCTC 10854 / RM-666).